A 251-amino-acid polypeptide reads, in one-letter code: Ubiquinone/menaquinone biosynthesis C-methyltransferase UbiE (251 aa).

S-adenosyl-L-methionine is bound by residues Thr-74, Asp-95, 123 to 124 (NA), and Ser-140.

The protein belongs to the class I-like SAM-binding methyltransferase superfamily. MenG/UbiE family.

It carries out the reaction a 2-demethylmenaquinol + S-adenosyl-L-methionine = a menaquinol + S-adenosyl-L-homocysteine + H(+). It catalyses the reaction a 2-methoxy-6-(all-trans-polyprenyl)benzene-1,4-diol + S-adenosyl-L-methionine = a 5-methoxy-2-methyl-3-(all-trans-polyprenyl)benzene-1,4-diol + S-adenosyl-L-homocysteine + H(+). It participates in quinol/quinone metabolism; menaquinone biosynthesis; menaquinol from 1,4-dihydroxy-2-naphthoate: step 2/2. The protein operates within cofactor biosynthesis; ubiquinone biosynthesis. Methyltransferase required for the conversion of demethylmenaquinol (DMKH2) to menaquinol (MKH2) and the conversion of 2-polyprenyl-6-methoxy-1,4-benzoquinol (DDMQH2) to 2-polyprenyl-3-methyl-6-methoxy-1,4-benzoquinol (DMQH2). This Cronobacter sakazakii (strain ATCC BAA-894) (Enterobacter sakazakii) protein is Ubiquinone/menaquinone biosynthesis C-methyltransferase UbiE.